A 175-amino-acid polypeptide reads, in one-letter code: Phytochrome-interacting ankyrin-repeat protein 1 (175 aa).

ANK repeat units lie at residues 30–59, 67–96, and 102–131; these read RGWT…DVNA, KGMT…NMEA, and CGWT…FLPD.

Interacts with phytochrome A (PHYA), both in Pr and Pfr forms.

It localises to the cytoplasm. The protein localises to the nucleus. The protein resides in the mitochondrion. The protein is Phytochrome-interacting ankyrin-repeat protein 1 of Arabidopsis thaliana (Mouse-ear cress).